The sequence spans 276 residues: Undecaprenyl-diphosphatase (276 aa).

A run of 8 helical transmembrane segments spans residues 1–21 (MSWLQVIVLSIVQGLTEFLPV), 39–59 (AGASFTAVTQLGTEFAVLIYF), 84–104 (YRLGWFVIVGTIPIGVFGLLF), 115–135 (LWLVATALIVFSVVIAAAEYY), 159–179 (LALMPGVSRSGATISAGLFLG), 188–208 (FGFLLAIPAVLASGLFSLPDA), 222–242 (QLIVATVIAFVVGFAAIAWFL), and 253–273 (FVGYRVVLGVVVLALLGTGVL).

The protein belongs to the UppP family.

The protein localises to the cell membrane. It catalyses the reaction di-trans,octa-cis-undecaprenyl diphosphate + H2O = di-trans,octa-cis-undecaprenyl phosphate + phosphate + H(+). Its function is as follows. Catalyzes the dephosphorylation of undecaprenyl diphosphate (UPP). Confers resistance to bacitracin. This is Undecaprenyl-diphosphatase from Mycolicibacterium smegmatis (strain ATCC 700084 / mc(2)155) (Mycobacterium smegmatis).